Reading from the N-terminus, the 772-residue chain is Lon protease (772 aa).

Residues 6–200 (YPTLPLKNTV…LMHRYLNHEV (195 aa)) form the Lon N-terminal domain. 352-359 (GPPGVGKT) serves as a coordination point for ATP. Residues 588 to 769 (QLAPGVAAGL…EEVLAEAIPD (182 aa)) form the Lon proteolytic domain. Residues S675 and K718 contribute to the active site.

It belongs to the peptidase S16 family. Homohexamer. Organized in a ring with a central cavity.

It localises to the cytoplasm. The enzyme catalyses Hydrolysis of proteins in presence of ATP.. ATP-dependent serine protease that mediates the selective degradation of mutant and abnormal proteins as well as certain short-lived regulatory proteins. Required for cellular homeostasis and for survival from DNA damage and developmental changes induced by stress. Degrades polypeptides processively to yield small peptide fragments that are 5 to 10 amino acids long. Binds to DNA in a double-stranded, site-specific manner. The polypeptide is Lon protease (Nitrosococcus oceani (strain ATCC 19707 / BCRC 17464 / JCM 30415 / NCIMB 11848 / C-107)).